Here is a 120-residue protein sequence, read N- to C-terminus: Putative 15 kDa capsid protein (120 aa).

It localises to the virion. This Orgyia pseudotsugata (Douglas-fir tussock moth) protein is Putative 15 kDa capsid protein (P15).